Here is a 189-residue protein sequence, read N- to C-terminus: Tumor protein p53-inducible protein 11 (189 aa).

Over 1–63 (MAGKQPPPLM…FAVREPLGLR (63 aa)) the chain is Cytoplasmic. At S14 the chain carries Phosphoserine. A helical membrane pass occupies residues 64–84 (VWQFLSAMLFSSVAIMALALP). The Extracellular portion of the chain corresponds to 85-108 (DQLYDAVFDGAEVTSKTPIRLYGG). Residues 109–129 (ALLSISLIMWNALYTAEKVII) form a helical membrane-spanning segment. A topological domain (cytoplasmic) is located at residue R130. The chain crosses the membrane as a helical span at residues 131–151 (WTLLTEACYFGVQSLVVTATL). The Extracellular segment spans residues 152 to 155 (AETG). Residues 156-176 (LMSLGTVLLLASRLLFVIVSI) form a helical membrane-spanning segment. At 177-189 (YYYYQVGRKPKKV) the chain is on the cytoplasmic side.

Its subcellular location is the membrane. This chain is Tumor protein p53-inducible protein 11 (Trp53i11), found in Mus musculus (Mouse).